We begin with the raw amino-acid sequence, 1405 residues long: Sterol 3-beta-glucosyltransferase (1405 aa).

Basic and acidic residues-rich tracts occupy residues 1–16 (MRPF…DRKL) and 95–105 (TGQRPRKESSV). Disordered stretches follow at residues 1–27 (MRPF…SASR), 83–186 (ARFD…SATP), and 203–230 (DLKA…ASVS). Residues 106–115 (RKGTSVSVNT) are compositionally biased toward polar residues. Low complexity predominate over residues 116–126 (SSLDPSQRSSS). A compositionally biased stretch (polar residues) spans 206 to 218 (ASSTERSQSSLNE). Residues 246–285 (EKVLVEYACSLLQSMLLQGYMYVTEGHICFYAYLPKKSTV) form the GRAM 1 domain. The region spanning 285–384 (VAIKSGYLHK…WVKALQKVIF (100 aa)) is the PH domain. Disordered regions lie at residues 461–526 (SQHL…DSSD) and 566–642 (TIYG…SGAP). The span at 483 to 493 (RWSLTSGTSRA) shows a compositional bias: polar residues. Basic and acidic residues predominate over residues 570–589 (LDRRPSGRERRGRRNSDETA). A compositionally biased stretch (polar residues) spans 590–603 (RSPSTRVNVGTGQQ). A compositionally biased stretch (basic and acidic residues) spans 606-624 (ELDRRTDGNTSGREARDTT). Residues 626–642 (ESDQYTQDPTKSFSGAP) show a composition bias toward polar residues. One can recognise a GRAM 2 domain in the interval 724–790 (DRFRAHFALP…RDIENVEKEK (67 aa)). UDP-alpha-D-glucose contacts are provided by serine 911, arginine 912, aspartate 914, alanine 1214, histidine 1216, histidine 1229, glycine 1233, threonine 1234, aspartate 1253, and glutamine 1254. Positions 1330-1367 (SIASSTPFSPTPSAKTAAEQDADDDVEDSEEWTFVGDD) are disordered. The span at 1332–1348 (ASSTPFSPTPSAKTAAE) shows a compositional bias: low complexity. Residues 1349 to 1367 (QDADDDVEDSEEWTFVGDD) are compositionally biased toward acidic residues.

This sequence belongs to the glycosyltransferase 28 family.

It is found in the cytoplasm. The protein localises to the preautophagosomal structure membrane. The enzyme catalyses a sterol + UDP-alpha-D-glucose = a sterol 3-beta-D-glucoside + UDP + H(+). The catalysed reaction is ergosterol + UDP-alpha-D-glucose = ergosteryl 3-beta-D-glucoside + UDP + H(+). Its function is as follows. Sterol glycosyltransferase responsible for the glycosylation of ergosterol to form ergosterol-glucoside. The sequence is that of Sterol 3-beta-glucosyltransferase from Aspergillus fumigatus (strain ATCC MYA-4609 / CBS 101355 / FGSC A1100 / Af293) (Neosartorya fumigata).